Here is a 259-residue protein sequence, read N- to C-terminus: 3'-5' ssDNA/RNA exonuclease TatD (259 aa).

A divalent metal cation contacts are provided by Glu92, His128, and His153.

The protein belongs to the metallo-dependent hydrolases superfamily. TatD-type hydrolase family. TatD subfamily. Monomer. Mg(2+) serves as cofactor.

Its subcellular location is the cytoplasm. In terms of biological role, 3'-5' exonuclease that prefers single-stranded DNA and RNA. May play a role in the H(2)O(2)-induced DNA damage repair. The protein is 3'-5' ssDNA/RNA exonuclease TatD of Erwinia tasmaniensis (strain DSM 17950 / CFBP 7177 / CIP 109463 / NCPPB 4357 / Et1/99).